We begin with the raw amino-acid sequence, 269 residues long: Aminodeoxychorismate lyase (269 aa).

Residue lysine 140 is modified to N6-(pyridoxal phosphate)lysine.

Belongs to the class-IV pyridoxal-phosphate-dependent aminotransferase family. In terms of assembly, homodimer. The cofactor is pyridoxal 5'-phosphate.

It carries out the reaction 4-amino-4-deoxychorismate = 4-aminobenzoate + pyruvate + H(+). Its pathway is cofactor biosynthesis; tetrahydrofolate biosynthesis; 4-aminobenzoate from chorismate: step 2/2. Its function is as follows. Involved in the biosynthesis of p-aminobenzoate (PABA), a precursor of tetrahydrofolate. Converts 4-amino-4-deoxychorismate into 4-aminobenzoate (PABA) and pyruvate. This chain is Aminodeoxychorismate lyase (pabC), found in Escherichia coli (strain K12).